We begin with the raw amino-acid sequence, 158 residues long: Ribosome maturation factor RimP (158 aa).

This sequence belongs to the RimP family.

The protein resides in the cytoplasm. Functionally, required for maturation of 30S ribosomal subunits. In Pseudomonas fluorescens (strain SBW25), this protein is Ribosome maturation factor RimP.